The sequence spans 294 residues: Sperm acrosome membrane-associated protein 1 (294 aa).

A signal peptide spans 1–29 (MSPRGTGCSAGLLMTVGWLLLAGLQSARG). Residues 30-221 (TNVTAAVQDA…LPATDAALIF (192 aa)) are Extracellular-facing. Residue N31 is glycosylated (N-linked (GlcNAc...) asparagine). The segment at 42–70 (AHEGEGEEETENNDSETAENYAPPETEDV) is disordered. Positions 46 to 58 (EGEEETENNDSET) are enriched in acidic residues. Residues 222–242 (VLTIGVIICVFIIFLLIFIII) form a helical membrane-spanning segment. Over 243–294 (NWAAVKAFWGAKASTPEVQSEQSSVRYKDSTSLDQLPTEMPGEDDALSEWNE) the chain is Cytoplasmic. At S256 the chain carries Phosphoserine. A compositionally biased stretch (polar residues) spans 258–267 (PEVQSEQSSV). Residues 258–294 (PEVQSEQSSVRYKDSTSLDQLPTEMPGEDDALSEWNE) are disordered. Phosphotyrosine is present on Y269. Over residues 283–294 (PGEDDALSEWNE) the composition is skewed to acidic residues. Residue S290 is modified to Phosphoserine.

Interacts with CYLC1; the interaction may be relevant for proper acrosome attachment to the nuclear envelope. N-glycosylated. Testis specific.

The protein localises to the cytoplasmic vesicle. Its subcellular location is the secretory vesicle. It is found in the acrosome inner membrane. Functionally, plays a role in acrosome formation and establishment of normal sperm morphology during spermatogenesis. Important for male fertility. The protein is Sperm acrosome membrane-associated protein 1 (SPACA1) of Homo sapiens (Human).